Consider the following 90-residue polypeptide: DNA-directed RNA polymerase subunit omega (90 aa).

Residues 69 to 90 (RQEQQEQEAAELAAVSSIAHTR) are disordered.

Belongs to the RNA polymerase subunit omega family. The RNAP catalytic core consists of 2 alpha, 1 beta, 1 beta' and 1 omega subunit. When a sigma factor is associated with the core the holoenzyme is formed, which can initiate transcription.

It catalyses the reaction RNA(n) + a ribonucleoside 5'-triphosphate = RNA(n+1) + diphosphate. Functionally, promotes RNA polymerase assembly. Latches the N- and C-terminal regions of the beta' subunit thereby facilitating its interaction with the beta and alpha subunits. The polypeptide is DNA-directed RNA polymerase subunit omega (Vibrio atlanticus (strain LGP32) (Vibrio splendidus (strain Mel32))).